The sequence spans 107 residues: Putidaredoxin (107 aa).

Residues 2–106 (SKVVYVSHDG…GIVVDVPDRQ (105 aa)) form the 2Fe-2S ferredoxin-type domain. 4 residues coordinate [2Fe-2S] cluster: C40, C46, C49, and C87.

It belongs to the adrenodoxin/putidaredoxin family. As to quaternary structure, monomer. It depends on [2Fe-2S] cluster as a cofactor.

In terms of biological role, the oxidation of camphor by cytochrome P450-CAM requires the participation of a flavoprotein, putidaredoxin reductase, and an iron-sulfur protein, putidaredoxin, to mediate the transfer of electrons from NADH to P450 for oxygen activation. The chain is Putidaredoxin (camB) from Pseudomonas putida (Arthrobacter siderocapsulatus).